Reading from the N-terminus, the 836-residue chain is Envelope glycoprotein gp160 (836 aa).

A signal peptide spans 1–21 (MGMQSGWPFFCLLISLTIGSD). Residues 22 to 656 (PHWVTVYYGV…ITKWLWYIKI (635 aa)) are Extracellular-facing. The cysteines at positions 43 and 63 are disulfide-linked. Asparagine 77, asparagine 121, asparagine 130, asparagine 134, asparagine 146, asparagine 150, asparagine 180, asparagine 189, asparagine 224, asparagine 228, asparagine 233, asparagine 254, asparagine 276, asparagine 282, asparagine 288, asparagine 318, asparagine 328, asparagine 340, and asparagine 341 each carry an N-linked (GlcNAc...) asparagine; by host glycan. Intrachain disulfides connect cysteine 108–cysteine 197, cysteine 115–cysteine 188, cysteine 120–cysteine 147, cysteine 210–cysteine 239, and cysteine 220–cysteine 231. Residues 120 to 146 (CNNSNGNSAGNSTTNRTEDLEDRQMKN) form a V1 region. The interval 147–188 (CSFNITTEIRDRKKQVYSLFYVEDVVPIKDGTDNNTYRLINC) is V2. The V3 stretch occupies residues 283 to 316 (CTRPGNNTGGQVQIGPAMTFYNIEKIVGDVRQAY). The cysteines at positions 283 and 317 are disulfide-linked. A CD4-binding loop region spans residues 349–359 (KNGGDLEVTHL). 2 disulfide bridges follow: cysteine 363–cysteine 418 and cysteine 370–cysteine 391. Residues 370–391 (CNTSRLFNESENKTNKTIILPC) form a V4 region. N-linked (GlcNAc...) asparagine; by host glycans are attached at residues asparagine 371, asparagine 377, asparagine 381, asparagine 384, asparagine 415, and asparagine 435. The V5 stretch occupies residues 434-441 (GNKTVYPS). The interval 482 to 503 (AAFGLGALFLGFLGAAGSTMGA) is fusion peptide. Residues 545–563 (KQLRAKVLAIERYLRDQQI) are immunosuppression. Cysteines 569 and 575 form a disulfide. N-linked (GlcNAc...) asparagine; by host glycosylation is found at asparagine 582, asparagine 588, asparagine 597, and asparagine 609. Residues 605–639 (RKVRNYSGVIFDLIEQAQEQQNTNEKALLELDQWA) are a coiled coil. Residues 634–655 (ELDQWASLWNWFDITKWLWYIK) form an MPER; binding to GalCer region. Residues 657–677 (AIMVVAGIIGIRIISAIITII) traverse the membrane as a helical segment. The Cytoplasmic portion of the chain corresponds to 678–836 (ARVRQGYSPL…IRQGLERALL (159 aa)). Residues 684–687 (YSPL) carry the YXXL motif; contains endocytosis signal motif. The disordered stretch occupies residues 696–715 (AARGPDRPEETEEGVGGQDR). The Di-leucine internalization motif motif lies at 835–836 (LL).

This sequence belongs to the HIV-1 env protein family. The mature envelope protein (Env) consists of a homotrimer of non-covalently associated gp120-gp41 heterodimers. The resulting complex protrudes from the virus surface as a spike. There seems to be as few as 10 spikes on the average virion. Interacts with host CD4, CCR5 and CXCR4. Gp120 also interacts with the C-type lectins CD209/DC-SIGN and CLEC4M/DC-SIGNR (collectively referred to as DC-SIGN(R)). Gp120 and gp41 interact with GalCer. Gp120 interacts with host ITGA4/ITGB7 complex; on CD4+ T-cells, this interaction results in rapid activation of integrin ITGAL/LFA-1, which facilitates efficient cell-to-cell spreading of HIV-1. Gp120 interacts with cell-associated heparan sulfate; this interaction increases virus infectivity on permissive cells and may be involved in infection of CD4- cells. In terms of assembly, the mature envelope protein (Env) consists of a homotrimer of non-covalently associated gp120-gp41 heterodimers. The resulting complex protrudes from the virus surface as a spike. There seems to be as few as 10 spikes on the average virion. Post-translationally, highly glycosylated by host. The high number of glycan on the protein is reffered to as 'glycan shield' because it contributes to hide protein sequence from adaptive immune system. In terms of processing, palmitoylation of the transmembrane protein and of Env polyprotein (prior to its proteolytic cleavage) is essential for their association with host cell membrane lipid rafts. Palmitoylation is therefore required for envelope trafficking to classical lipid rafts, but not for viral replication. Specific enzymatic cleavages in vivo yield mature proteins. Envelope glycoproteins are synthesized as an inactive precursor that is heavily N-glycosylated and processed likely by host cell furin in the Golgi to yield the mature SU and TM proteins. The cleavage site between SU and TM requires the minimal sequence [KR]-X-[KR]-R. About 2 of the 9 disulfide bonds of gp41 are reduced by P4HB/PDI, following binding to CD4 receptor.

It localises to the virion membrane. Its subcellular location is the host cell membrane. It is found in the host endosome membrane. Oligomerizes in the host endoplasmic reticulum into predominantly trimers. In a second time, gp160 transits in the host Golgi, where glycosylation is completed. The precursor is then proteolytically cleaved in the trans-Golgi and thereby activated by cellular furin or furin-like proteases to produce gp120 and gp41. In terms of biological role, attaches the virus to the host lymphoid cell by binding to the primary receptor CD4. This interaction induces a structural rearrangement creating a high affinity binding site for a chemokine coreceptor like CXCR4 and/or CCR5. Acts as a ligand for CD209/DC-SIGN and CLEC4M/DC-SIGNR, which are respectively found on dendritic cells (DCs), and on endothelial cells of liver sinusoids and lymph node sinuses. These interactions allow capture of viral particles at mucosal surfaces by these cells and subsequent transmission to permissive cells. HIV subverts the migration properties of dendritic cells to gain access to CD4+ T-cells in lymph nodes. Virus transmission to permissive T-cells occurs either in trans (without DCs infection, through viral capture and transmission), or in cis (following DCs productive infection, through the usual CD4-gp120 interaction), thereby inducing a robust infection. In trans infection, bound virions remain infectious over days and it is proposed that they are not degraded, but protected in non-lysosomal acidic organelles within the DCs close to the cell membrane thus contributing to the viral infectious potential during DCs' migration from the periphery to the lymphoid tissues. On arrival at lymphoid tissues, intact virions recycle back to DCs' cell surface allowing virus transmission to CD4+ T-cells. Its function is as follows. Acts as a class I viral fusion protein. Under the current model, the protein has at least 3 conformational states: pre-fusion native state, pre-hairpin intermediate state, and post-fusion hairpin state. During fusion of viral and target intracellular membranes, the coiled coil regions (heptad repeats) assume a trimer-of-hairpins structure, positioning the fusion peptide in close proximity to the C-terminal region of the ectodomain. The formation of this structure appears to drive apposition and subsequent fusion of viral and target cell membranes. Complete fusion occurs in host cell endosomes and is dynamin-dependent, however some lipid transfer might occur at the plasma membrane. The virus undergoes clathrin-dependent internalization long before endosomal fusion, thus minimizing the surface exposure of conserved viral epitopes during fusion and reducing the efficacy of inhibitors targeting these epitopes. Membranes fusion leads to delivery of the nucleocapsid into the cytoplasm. This chain is Envelope glycoprotein gp160, found in Human immunodeficiency virus type 1 group N (isolate YBF106) (HIV-1).